The chain runs to 416 residues: Phosphoribosylamine--glycine ligase (416 aa).

The region spanning 107–303 is the ATP-grasp domain; sequence KDVMACAGVP…LAGLLMAAAT (197 aa). 133–184 serves as a coordination point for ATP; it reads LAAFGAPYVVKDDGLAAGKGVVVTDDVEAARAHANACDRVVVEEFLDGPEVS. Residues Glu-273 and Asn-275 each contribute to the Mg(2+) site.

The protein belongs to the GARS family. Mg(2+) is required as a cofactor. Mn(2+) serves as cofactor.

The enzyme catalyses 5-phospho-beta-D-ribosylamine + glycine + ATP = N(1)-(5-phospho-beta-D-ribosyl)glycinamide + ADP + phosphate + H(+). It functions in the pathway purine metabolism; IMP biosynthesis via de novo pathway; N(1)-(5-phospho-D-ribosyl)glycinamide from 5-phospho-alpha-D-ribose 1-diphosphate: step 2/2. The chain is Phosphoribosylamine--glycine ligase from Streptomyces coelicolor (strain ATCC BAA-471 / A3(2) / M145).